Consider the following 457-residue polypeptide: Argininosuccinate lyase (457 aa).

Belongs to the lyase 1 family. Argininosuccinate lyase subfamily.

The protein localises to the cytoplasm. The catalysed reaction is 2-(N(omega)-L-arginino)succinate = fumarate + L-arginine. Its pathway is amino-acid biosynthesis; L-arginine biosynthesis; L-arginine from L-ornithine and carbamoyl phosphate: step 3/3. The chain is Argininosuccinate lyase from Haemophilus influenzae (strain 86-028NP).